Consider the following 467-residue polypeptide: Uronate isomerase (467 aa).

It belongs to the metallo-dependent hydrolases superfamily. Uronate isomerase family.

The catalysed reaction is D-glucuronate = D-fructuronate. The enzyme catalyses aldehydo-D-galacturonate = keto-D-tagaturonate. It participates in carbohydrate metabolism; pentose and glucuronate interconversion. The protein is Uronate isomerase of Geobacillus thermodenitrificans (strain NG80-2).